The primary structure comprises 678 residues: GAS2-like protein 1 (678 aa).

An N-acetylalanine modification is found at A2. Residues 27 to 148 (EAMKEDLADW…CLLEVARRGA (122 aa)) form the Calponin-homology (CH) domain. Positions 203–275 (NDLRNLDELV…HYLDKHDPCR (73 aa)) constitute a GAR domain. The segment covering 276-291 (CSSSTHRLPQQRTGTF) has biased composition (polar residues). Disordered regions lie at residues 276-524 (CSSS…FRRL) and 538-678 (AASH…DSSM). A phosphoserine mark is found at S306 and S316. Over residues 327–340 (GTKEGPETPLRPRD) the composition is skewed to basic and acidic residues. The residue at position 334 (T334) is a Phosphothreonine. A phosphoserine mark is found at S352 and S355. Positions 354-365 (DSDSSASSAQSG) are enriched in low complexity. Over residues 370–381 (RSDDSATGSRRE) the composition is skewed to basic and acidic residues. The span at 392 to 403 (PASPRRPTAPRS) shows a compositional bias: low complexity. A Phosphoserine modification is found at S394. Residues 404–413 (QSRDRLDRGR) are compositionally biased toward basic and acidic residues. Phosphoserine occurs at positions 436 and 438. The segment covering 437-454 (QSREEQAVLMVRRDRDGQ) has biased composition (basic and acidic residues). A compositionally biased stretch (gly residues) spans 461–471 (GRGGGGSGGSG). A phosphoserine mark is found at S482 and S489. Residues 485-495 (APRPSRGPSPG) are compositionally biased toward pro residues. At R490 the chain carries Omega-N-methylarginine. S493 is subject to Phosphoserine. T501 is modified (phosphothreonine). Omega-N-methylarginine is present on R507. Composition is skewed to low complexity over residues 509 to 519 (PLQLDPQQEQQ) and 554 to 568 (DSAYCSSSSSSSSLS). At R630 the chain carries Omega-N-methylarginine. Over residues 631–641 (GRMDTQPDRKP) the composition is skewed to basic and acidic residues. S654 is modified (phosphoserine). Polar residues predominate over residues 666–678 (HSVTPRTEPDSSM).

Belongs to the GAS2 family. In terms of assembly, interacts with MAPRE1.

The protein localises to the cytoplasm. The protein resides in the cytoskeleton. Its subcellular location is the stress fiber. Seems to be involved in the cross-linking of microtubules and microfilaments. Regulates microtubule dynamics and stability by interacting with microtubule plus-end tracking proteins, such as MAPRE1, to regulate microtubule growth along actin stress fibers. This is GAS2-like protein 1 (Gas2l1) from Mus musculus (Mouse).